A 301-amino-acid chain; its full sequence is Peroxisome assembly protein 26 (301 aa).

Residues 1 to 246 (MKNDSSTSAA…DAAASHLLSQ (246 aa)) lie on the Cytoplasmic side of the membrane. Residues 247 to 263 (PFKKSLLAALILCLLVL) traverse the membrane as a helical; Signal-anchor for type II membrane protein segment. Residues 264-301 (RFDPATPSSLPFLYQLAHLFRRIQKATLSRLYPLALRD) lie on the Peroxisomal side of the membrane.

This sequence belongs to the peroxin-26 family. As to quaternary structure, interacts directly with PEX6 via its cytoplasmic domain. Interacts indirectly with PEX1, via its interaction with PEX6.

It is found in the peroxisome membrane. In terms of biological role, peroxisomal docking factor that anchors PEX1 and PEX6 to peroxisome membranes. It is therefore required for the formation of the PEX1-PEX6 AAA ATPase complex, a complex that mediates the extraction of the PEX5 receptor from peroxisomal membrane. In Cricetulus griseus (Chinese hamster), this protein is Peroxisome assembly protein 26 (Pex26).